Consider the following 321-residue polypeptide: MKALARLIVGLLILDAAVTAPTLESINYNSETYDATLEDLDHLYNYENIPMGRAEIEIATVMPSGNRELLTPPPQPEEAEEEEEEESTPRLIDGSSPQEPEFTGVLGPQTNEDFPTCLLCTCISTTVYCDDHELDAIPPLPKNTAYFYSRFNRIKKINKNDFASLNDLRRIDLTSNLISEIDEDAFRKLPQLRELVLRDNKIRQLPELPTTLRFIDISNNRLGRKGIKQEAFKDMYDLHHLYLTDNNLDHIPLPLPENLRALHLQNNNIMEMHEDTFCNVKNLTYIRKALEDIRLDGNPINLSKTPQAYMCLPRLPIGSLV.

A signal peptide spans 1-19; that stretch reads MKALARLIVGLLILDAAVT. Residue threonine 60 is glycosylated (O-linked (GalNAc...) threonine). O-linked (Xyl...) (dermatan sulfate) serine glycosylation occurs at serine 64. The segment at 64–100 is disordered; that stretch reads SGNRELLTPPPQPEEAEEEEEEESTPRLIDGSSPQEP. A compositionally biased stretch (acidic residues) spans 77–86; the sequence is EEAEEEEEEE. An O-linked (GalNAc...) serine glycan is attached at serine 95. Residues 105 to 142 form the LRRNT domain; that stretch reads VLGPQTNEDFPTCLLCTCISTTVYCDDHELDAIPPLPK. An intrachain disulfide couples cysteine 117 to cysteine 129. 5 LRR repeats span residues 143–164, 167–188, 191–212, 237–257, and 258–279; these read NTAYFYSRFNRIKKINKNDFAS, DLRRIDLTSNLISEIDEDAFRK, QLRELVLRDNKIRQLPELPTTL, DLHHLYLTDNNLDHIPLPLPE, and NLRALHLQNNNIMEMHEDTFCN. Residues cysteine 278 and cysteine 311 are joined by a disulfide bond. A glycan (N-linked (GlcNAc...) asparagine) is linked at asparagine 282. One copy of the LRR 6 repeat lies at 289–309; that stretch reads ALEDIRLDGNPINLSKTPQAY.

Belongs to the small leucine-rich proteoglycan (SLRP) family. SLRP class III subfamily. A long and a short form present in approximately equimolar amounts may arise by proteolysis or cleavage by exopeptidases. In terms of processing, the O-linked polysaccharides on Thr-60 and Ser-95 are probably the mucin type linked to GalNAc. There is one glycosaminoglycan chain, known to be dermatan sulfate, and it is probably the O-glycosylation at Ser-64. Preferentially expressed in the zone of flattened chondrocytes of the developing limb cartilage.

The protein localises to the secreted. It is found in the extracellular space. It localises to the extracellular matrix. Its function is as follows. May have a role in bone formation and also in establishing the ordered structure of cartilage through matrix organization. The chain is Epiphycan (EPYC) from Bos taurus (Bovine).